Reading from the N-terminus, the 469-residue chain is Diacetylchitobiose binding protein NgcE (469 aa).

Residues 1–37 constitute a signal peptide (tat-type signal); sequence MTIRAGSLDRRTLLRGAIATAAMGSFAVACSSPSSED. The tract at residues 30 to 54 is disordered; that stretch reads CSSPSSEDKESDSGPKGEKSANNPF. Residues 35–48 show a composition bias toward basic and acidic residues; that stretch reads SEDKESDSGPKGEK.

The protein belongs to the bacterial solute-binding protein 1 family. In terms of assembly, the complex is composed of two ATP-binding proteins (MsiK), two transmembrane proteins (NgcF and NgcG) and a solute-binding protein (NgcE). Predicted to be exported by the Tat system. The position of the signal peptide cleavage has not been experimentally proven.

Its subcellular location is the cell membrane. In terms of biological role, part of the ABC transporter complex NgcEFG-MsiK involved in N,N'-diacetylchitobiose ((GlcNAc)2) uptake. Binds (GlcNAc)2. Can also bind GlcNAc. The chain is Diacetylchitobiose binding protein NgcE from Streptomyces coelicolor (strain ATCC BAA-471 / A3(2) / M145).